The chain runs to 26 residues: uncharacterized protein (26 aa).

A helical membrane pass occupies residues 3–23 (IIYLILFLIVIYLLYRILDVL).

It is found in the membrane. This is an uncharacterized protein from Helicobacter pylori (strain J99 / ATCC 700824) (Campylobacter pylori J99).